Consider the following 244-residue polypeptide: Protein crossbronx (244 aa).

A UBC core domain is found at Gln20 to Asp176.

Belongs to the ubiquitin-conjugating enzyme family. FTS subfamily.

The polypeptide is Protein crossbronx (cbx) (Drosophila yakuba (Fruit fly)).